Here is a 536-residue protein sequence, read N- to C-terminus: Indolin-2-one monooxygenase (536 aa).

The helical transmembrane segment at 18-34 (GTATHALLLGVLIFLVI) threads the bilayer. Cys480 lines the heme pocket.

This sequence belongs to the cytochrome P450 family. Heme is required as a cofactor.

The protein localises to the membrane. The catalysed reaction is indolin-2-one + reduced [NADPH--hemoprotein reductase] + O2 = 3-hydroxyindolin-2-one + oxidized [NADPH--hemoprotein reductase] + H2O + H(+). The protein operates within secondary metabolite biosynthesis; 2,4-dihydroxy-1,4-benzoxazin-3-one biosynthesis; 2,4-dihydroxy-1,4-benzoxazin-3-one from indoleglycerol phosphate: step 3/5. In terms of biological role, catalyzes the conversion of indolin-2-one to 3-hydroxyindolin-2-one. In Zea mays (Maize), this protein is Indolin-2-one monooxygenase (CYP71C2).